The chain runs to 140 residues: Ergosterol biosynthetic protein 28 homolog (140 aa).

4 helical membrane passes run 4-24 (FLNVLRSWLVMVSIIAMGNTL), 52-72 (TFGIWTLLSSVIRCLCAIDIH), 79-99 (ITLWTFLLALGHFLSELFVYG), and 105-125 (IGVLAPLMVASFSILGMLVGL).

It belongs to the ERG28 family. In terms of tissue distribution, ubiquitous; strongly expressed in testis and some cancer cell lines.

The protein localises to the endoplasmic reticulum membrane. The sequence is that of Ergosterol biosynthetic protein 28 homolog from Homo sapiens (Human).